The chain runs to 384 residues: tRNA-specific 2-thiouridylase MnmA (384 aa).

ATP is bound by residues 9 to 16 (GMSGGVDS) and Met35. Positions 95 to 97 (NPD) are interaction with target base in tRNA. Cys100 (nucleophile) is an active-site residue. Cys100 and Cys196 form a disulfide bridge. Gly124 provides a ligand contact to ATP. The tract at residues 146–148 (KDQ) is interaction with tRNA. The Cysteine persulfide intermediate role is filled by Cys196. Residues 308-309 (RY) are interaction with tRNA.

The protein belongs to the MnmA/TRMU family.

The protein localises to the cytoplasm. The catalysed reaction is S-sulfanyl-L-cysteinyl-[protein] + uridine(34) in tRNA + AH2 + ATP = 2-thiouridine(34) in tRNA + L-cysteinyl-[protein] + A + AMP + diphosphate + H(+). In terms of biological role, catalyzes the 2-thiolation of uridine at the wobble position (U34) of tRNA, leading to the formation of s(2)U34. The protein is tRNA-specific 2-thiouridylase MnmA of Burkholderia ambifaria (strain ATCC BAA-244 / DSM 16087 / CCUG 44356 / LMG 19182 / AMMD) (Burkholderia cepacia (strain AMMD)).